A 399-amino-acid polypeptide reads, in one-letter code: Tryptophan synthase beta chain (399 aa).

Residue lysine 92 is modified to N6-(pyridoxal phosphate)lysine.

Belongs to the TrpB family. In terms of assembly, tetramer of two alpha and two beta chains. The cofactor is pyridoxal 5'-phosphate.

The catalysed reaction is (1S,2R)-1-C-(indol-3-yl)glycerol 3-phosphate + L-serine = D-glyceraldehyde 3-phosphate + L-tryptophan + H2O. Its pathway is amino-acid biosynthesis; L-tryptophan biosynthesis; L-tryptophan from chorismate: step 5/5. Its function is as follows. The beta subunit is responsible for the synthesis of L-tryptophan from indole and L-serine. In Thiobacillus denitrificans (strain ATCC 25259 / T1), this protein is Tryptophan synthase beta chain.